The primary structure comprises 84 residues: Gomesin-like peptide (84 aa).

The N-terminal stretch at 1 to 23 (MNRTRALVCLFLAVLILAHESEA) is a signal peptide. Gln24 carries the post-translational modification Pyrrolidone carboxylic acid. Disulfide bonds link Cys25–Cys38 and Cys29–Cys34. Arginine amide is present on Arg41. Positions 42-84 (GKRSVEEPSGGAQVVEKRAVDDADIPSAVEERELDEEESIEFR) are excised as a propeptide.

As to expression, expressed by the venom gland.

It is found in the secreted. In terms of biological role, antibacterial peptide. The sequence is that of Gomesin-like peptide from Hadronyche infensa (Fraser island funnel-web spider).